A 232-amino-acid polypeptide reads, in one-letter code: Sugar fermentation stimulation protein homolog (232 aa).

It belongs to the SfsA family.

In Geobacter metallireducens (strain ATCC 53774 / DSM 7210 / GS-15), this protein is Sugar fermentation stimulation protein homolog.